The sequence spans 95 residues: Co-chaperonin GroES (95 aa).

It belongs to the GroES chaperonin family. In terms of assembly, heptamer of 7 subunits arranged in a ring. Interacts with the chaperonin GroEL.

The protein resides in the cytoplasm. In terms of biological role, together with the chaperonin GroEL, plays an essential role in assisting protein folding. The GroEL-GroES system forms a nano-cage that allows encapsulation of the non-native substrate proteins and provides a physical environment optimized to promote and accelerate protein folding. GroES binds to the apical surface of the GroEL ring, thereby capping the opening of the GroEL channel. This chain is Co-chaperonin GroES, found in Bordetella bronchiseptica (strain ATCC BAA-588 / NCTC 13252 / RB50) (Alcaligenes bronchisepticus).